Here is a 353-residue protein sequence, read N- to C-terminus: Terpene synthase 3 (353 aa).

The Mg(2+) site is built by Asp118, Asn261, and Glu269. Positions 118–122 (DDLLE) match the D(D/E)XX(D/E) motif motif. Residues 261-269 (NDTFLLKKE) carry the NSE motif motif. A WxxxxxRY motif motif is present at residues 342 to 349 (WCSKTTRY).

The protein belongs to the terpene synthase family. It depends on Mg(2+) as a cofactor.

In terms of biological role, terpene synthase that may be involved in the production of volatile terpenoids. Does not show detectable terpene products with either farnesyl diphosphate (FPP) or geranyl diphosphate (GPP). P.polycephalum has a unique biology and these volatile terpenoids could function in internal communication of P.polycephalum, to mark the territory that have been explored, or they may be involved in chemotaxis. The protein is Terpene synthase 3 of Physarum polycephalum (Slime mold).